Here is a 316-residue protein sequence, read N- to C-terminus: WEB family protein At3g13190 (316 aa).

Coiled-coil stretches lie at residues 42 to 90, 119 to 195, and 233 to 266; these read WNKE…MIND, EEES…AEEH, and RDET…MAQE. The interval 295–316 is disordered; that stretch reads STKEVLKSKPRSSSKEGCLVKC.

The protein belongs to the WEB family.

The protein is WEB family protein At3g13190 of Arabidopsis thaliana (Mouse-ear cress).